A 1098-amino-acid chain; its full sequence is Bifunctional helicase and thymine dioxygenase JBP2 (1098 aa).

Positions 1–540 (MLNGLTRVST…PPLFVPTRLA (540 aa)) are thymine dioxygenase. Residues histidine 415, aspartate 417, and histidine 465 each coordinate Fe cation. Arginine 479 contacts 2-oxoglutarate. A DNA Helicase region spans residues 541 to 1098 (SHLAPVQLAA…RYQESVRESE (558 aa)). The Helicase ATP-binding domain maps to 555-730 (VERTEKQSGC…YRLVGWVNKG (176 aa)). 568-575 (MTMGLGKT) serves as a coordination point for ATP. The DEAH box motif lies at 681–684 (DEGH). Residues 897-1057 (VLVDIVLRVQ…ALPDELEDCA (161 aa)) enclose the Helicase C-terminal domain.

This sequence in the C-terminal section; belongs to the SNF2/RAD54 helicase family. The protein in the N-terminal section; belongs to the TET family. JBP2 subfamily. It depends on Fe(2+) as a cofactor.

The protein localises to the nucleus. The catalysed reaction is ATP + H2O = ADP + phosphate + H(+). The enzyme catalyses thymine + 2-oxoglutarate + O2 = 5-hydroxymethyluracil + succinate + CO2. In terms of biological role, dioxygenase that catalyzes the first step of DNA base J (beta-d-glucosyl-HOMedU) biosynthesis by converting thymine to 5-hydroxymethyluracil (HOMedU). DNA base J is a hypermodified thymidine residue found in the genome of kinetoplastid parasites, which is localized primarily to repetitive DNA, namely the telomeres, and is implicated in the regulation of antigenic variation. Probably also acts as a DNA helicase. Recognizes and binds specific regions of the genome, hydrolyzes ATP and allows the DNA base J de novo synthesis. Involved in initial synthesis of DNA base J, JBP1 being able to act via the basal level of DNA base J and propagate further synthesis. In contrast to JBP1, it does not specifically bind DNA base J, however it binds chromatin. This chain is Bifunctional helicase and thymine dioxygenase JBP2 (JBP2), found in Leishmania tarentolae (Sauroleishmania tarentolae).